Reading from the N-terminus, the 333-residue chain is Serine proteinase inhibitor 2 (333 aa).

The protein belongs to the serpin family. Poxviruses subfamily.

The protein localises to the host cytoplasm. Functionally, weak inhibitor of the interleukin-1-beta converting enzyme (ICE) and of granzyme B. Does not form a stable complex with ICE, but can for a stable complex with granzyme B. In Myxoma virus (strain Uriarra) (MYXV), this protein is Serine proteinase inhibitor 2 (SERP2).